The sequence spans 294 residues: Phenylalanine-4-hydroxylase (294 aa).

A disordered region spans residues 1-20; sequence MSGDGLSNGPPPGARPDWTI. The Fe cation site is built by H129, H134, and E175.

It belongs to the biopterin-dependent aromatic amino acid hydroxylase family. Fe(2+) serves as cofactor.

It carries out the reaction (6R)-L-erythro-5,6,7,8-tetrahydrobiopterin + L-phenylalanine + O2 = (4aS,6R)-4a-hydroxy-L-erythro-5,6,7,8-tetrahydrobiopterin + L-tyrosine. It participates in amino-acid degradation; L-phenylalanine degradation; acetoacetate and fumarate from L-phenylalanine: step 1/6. The sequence is that of Phenylalanine-4-hydroxylase (phhA) from Caulobacter vibrioides (strain ATCC 19089 / CIP 103742 / CB 15) (Caulobacter crescentus).